Reading from the N-terminus, the 941-residue chain is RNA-binding protein 4F (941 aa).

Residues 1-13 (MDADKQLERQLEK) are compositionally biased toward basic and acidic residues. A disordered region spans residues 1-149 (MDADKQLERQ…DSDNAGGGNQ (149 aa)). Acidic residues predominate over residues 14-32 (ELDEMPAEDLDDDAYDEYD). Polar residues predominate over residues 42–52 (GSPQQGHSESP). Serine 43 is subject to Phosphoserine. Positions 55 to 65 (EEEHKSEELRQ) are enriched in basic and acidic residues. Over residues 87–98 (SSDDEPSVEETE) the composition is skewed to acidic residues. Residues 111 to 134 (DSSSSSDDVGVIEGSELESNSEVS) show a composition bias toward low complexity. A Phosphoserine modification is found at serine 153. The disordered stretch occupies residues 629–713 (RSRIKPNSQS…GPANAEAKES (85 aa)). The span at 671-680 (EQQQQQQQQQ) shows a compositional bias: low complexity. Position 713 is a phosphoserine (serine 713). Residue tyrosine 717 is modified to Phosphotyrosine. A Phosphoserine modification is found at serine 718. The RRM domain occupies 724–801 (NKIFVRNLHP…MNISVAISNP (78 aa)). 3 stretches are compositionally biased toward basic and acidic residues: residues 862-902 (EANG…KGDD), 913-922 (QKGDEKKEEE), and 930-941 (SNDDFRKLFLKD). The segment at 862-941 (EANGEEQKGD…DDFRKLFLKD (80 aa)) is disordered.

It is found in the cytoplasm. May be involved in gene regulation during development. Binds RNA. The chain is RNA-binding protein 4F from Drosophila melanogaster (Fruit fly).